The primary structure comprises 808 residues: Sucrose synthase isoform 1 (808 aa).

The GT-B glycosyltransferase stretch occupies residues 277-754; the sequence is MVFNVVILSP…GLKRIQEKYT (478 aa).

Belongs to the glycosyltransferase 1 family. Plant sucrose synthase subfamily. As to quaternary structure, homotetramer. Expressed in stems, in roots at different developmental stages, and in flower buds, flowers and maturing seeds, with the highest levels in strong utilization sinks for sucrose such as growing stems and tap root tips.

The catalysed reaction is an NDP-alpha-D-glucose + D-fructose = a ribonucleoside 5'-diphosphate + sucrose + H(+). Its activity is regulated as follows. Fructose acts as a non-competitive inhibitor with an inhibition constant of 17.2 mM. In contrast, glucose inhibits uncompetitively with an inhibition constant of 4.3 mM. Functionally, sucrose-cleaving enzyme that provides UDP-glucose and fructose for various metabolic pathways. The sequence is that of Sucrose synthase isoform 1 from Daucus carota (Wild carrot).